The primary structure comprises 127 residues: Ribonuclease P protein component (127 aa).

This sequence belongs to the RnpA family. In terms of assembly, consists of a catalytic RNA component (M1 or rnpB) and a protein subunit.

It catalyses the reaction Endonucleolytic cleavage of RNA, removing 5'-extranucleotides from tRNA precursor.. RNaseP catalyzes the removal of the 5'-leader sequence from pre-tRNA to produce the mature 5'-terminus. It can also cleave other RNA substrates such as 4.5S RNA. The protein component plays an auxiliary but essential role in vivo by binding to the 5'-leader sequence and broadening the substrate specificity of the ribozyme. In Synechococcus sp. (strain RCC307), this protein is Ribonuclease P protein component.